A 363-amino-acid chain; its full sequence is MQAGFFHTPYNLPTRTARQMFDWSLKLAQVCDEAGFADFMIGEHSTLAWENIPCPEIIIGAAAPLTKNIRFAPMAHLLPYHNPASLAIQVGWLSQILEGRYFLGVAPGGHHTDAILHGFEGIGPLQEQMFEALELMEKVWARKPFMEKGKFFQAGFPGPDTMPEYDVEIADNSPWGGREALEIAVTGLTKNSSSLKWAGERNYSPISFFGGHEVMRSHYDTWAAAMQSKGFTPDTSRFRVTREIFIADTDAEARKRAKASGMAKTWEHYLFPIYKKFNLFPGIIADAGLDIDPSQIDMDFLADHVWLCGSPETVKGKIENMIERSGGCGQIIVNSHDNIDNPEPYFESLQRLAQEVLPNVKTS.

Residues Met-74 and 186-194 (TGLTKNSSS) each bind FMN.

Belongs to the bacterial luciferase oxidoreductase family. Homodimer. Likely forms a loose transient complex with a P.putida flavin reductase that provides the required FMNH(2) to the enzyme.

The catalysed reaction is (1R,4R)-bornane-2,5-dione + FMNH2 + O2 = (1R,4R)-5-oxo-1,2-campholide + FMN + H2O + H(+). Its pathway is terpene metabolism; (R)-camphor degradation. Functionally, involved in the degradation and assimilation of (+)-camphor, which allows P.putida strain NCIMB 10007 to grow on this enantiomer of camphor as the sole carbon source. Catalyzes the FMNH(2)-dependent lactonization of 2,5-diketocamphane via a Baeyer-Villiger oxidation to produce the unstable lactone 5-oxo-1,2-campholide with (R,R) configuration, that presumably undergoes spontaneous hydrolysis to form 2-oxo-Delta(3)-4,5,5-trimethylcyclopentenylacetate. Is also able to convert (+)-camphor and norcamphor to the corresponding lactone in vitro. Shows no conversion of (-)-camphor, (+)-fenchone, (-)-fenchone, and (+)-nopinone. Acts on other bicyclic ketones and, to a lesser extent, on some 2- and 4-substituted monocyclic ketones. The chain is 2,5-diketocamphane 1,2-monooxygenase 2 from Pseudomonas putida (Arthrobacter siderocapsulatus).